A 513-amino-acid chain; its full sequence is Histone acetyltransferase KAT5 (513 aa).

The 58-residue stretch at 8–65 (IEGCRLPVLRRNQDNEDEWPLAEILSVKDISGRKLFYVHYIDFNKRLDEWVTHERLDL) folds into the Tudor-knot domain. Lys-52 is modified (N6-acetyllysine). The disordered stretch occupies residues 69–106 (QFPKKEAKTPTKNGLPGSRPGSPEREVPASAQASGKTL). The residue at position 86 (Ser-86) is a Phosphoserine. Ser-90 is subject to Phosphoserine; by CDK1 and CDK9. N6-acetyllysine; by autocatalysis is present on residues Lys-104 and Lys-120. The disordered stretch occupies residues 122-217 (REAIPGGEPD…SAPRMTGSLV (96 aa)). A compositionally biased stretch (polar residues) spans 133–144 (PLSSSSCLQPNH). N6-acetyllysine; by autocatalysis occurs at positions 148, 150, 187, and 189. Position 199 is a phosphoserine (Ser-199). An MYST-type HAT domain is found at 227 to 504 (TRMKNIECIE…IDSKCLHFTP (278 aa)). The C2HC MYST-type zinc-finger motif lies at 260–285 (LYLCEFCLKYGRSLKCLQRHLTKCDL). The residue at position 327 (Lys-327) is an N6-acetyllysine; by autocatalysis. The interaction with ATF2 stretch occupies residues 368–513 (ACILTLPPYQ…PKDWSKRGKW (146 aa)). Acetyl-CoA contacts are provided by residues 370-372 (ILT) and 377-383 (QRRGYGK). Glu-403 acts as the Proton donor/acceptor in catalysis. Ser-407 and Ser-416 together coordinate acetyl-CoA. A Glycyl lysine isopeptide (Lys-Gly) (interchain with G-Cter in SUMO1); alternate cross-link involves residue Lys-430. Lys-430 is covalently cross-linked (Glycyl lysine isopeptide (Lys-Gly) (interchain with G-Cter in SUMO2); alternate). A Glycyl lysine isopeptide (Lys-Gly) (interchain with G-Cter in SUMO1) cross-link involves residue Lys-451.

The protein belongs to the MYST (SAS/MOZ) family. In terms of assembly, component of the NuA4 histone acetyltransferase complex which contains the catalytic subunit KAT5/TIP60 and the subunits EP400, TRRAP/PAF400, BRD8/SMAP, EPC1, DMAP1/DNMAP1, RUVBL1/TIP49, RUVBL2, ING3, actin, ACTL6A/BAF53A, MORF4L1/MRG15, MORF4L2/MRGX, MRGBP, YEATS4/GAS41, VPS72/YL1 and MEAF6. KAT5/TIP60, EPC1, and ING3 together constitute a minimal HAT complex termed Piccolo NuA4. The NuA4 complex interacts with MYC. Interacts with ATM. Interacts with JADE1. Interacts with PLA2G4A/CPLA2, EDNRA and HDAC7. Interacts with the cytoplasmic tail of APP and APBB1/FE65. Interacts with TRIM24 and TRIM68. Forms a complex with SENP6 and UBE2I in response to UV irradiation. Identified in a complex with HINT1. Interacts with ATF2 and CUL3. Interacts with NR1D2 (via N-terminus). Component of a SWR1-like complex. Interacts with FOXP3. Interacts with ZBTB49. Interacts with SRF. Interacts with ATF3; promoting autoacetylation and deubiquitination by USP7. Interacts with EP300/p300; interaction promotes KAT5 autoacetylation. Interacts with PRKDC; interaction is impaired following KAT5 sumoylation. Interacts with GPR50. Interacts with NME3; this interaction enables recruitment of NME3 at DNA damage sites where it plays a role in the repair of DNA. Phosphorylated on Ser-86 and Ser-90; enhanced during G2/M phase. The phosphorylated form has a higher activity. Phosphorylation at Ser-90 by CDK1 or CDK9 is a prerequisite for phosphorylation at Ser-86 by GSK3. Phosphorylation at Ser-86 by GSK3 (GSK3A or GSK3B) activates acetyltransferase and acyltransferase activity. Phosphorylation at Ser-90 by CDK9 promotes KAT5 recruitment to chromatin. Phosphorylation by VRK1 following DNA damage promotes KAT5 association with chromatin and histone acetyltransferase activity. Post-translationally, autoacetylated. Autoacetylation is required for histone acetyltransferase activity. Autoacetylation at Lys-327 is facilitated by interaction with EP300/p300: it prevents ubiquitination and subsequent degradation by the proteasome and promotes acetylation of target proteins. Deacetylated by HDAC3 and SIRT1. Deacetylation by HDAC3 promotes its ubiquitination and cytoplasmic localization. In terms of processing, sumoylated by UBE2I at Lys-430 and Lys-451, leading to increase of its histone acetyltransferase activity in UV-induced DNA damage response, as well as its translocation to nuclear bodies. Sumoylation with SUMO2 by PIAS4 at Lys-430 promotes repair of DNA double-strand breaks (DSBs) via homologous recombination (HR). Sumoylation by PIAS4 impairs interaction with PRKDC, inhibiting non-homologous end joining (NHEJ)-mediated repair of DSBs, thereby facilitating HR. Desumoylated by SENP3. Ubiquitinated by MDM2, leading to its proteasome-dependent degradation. Ubiquitination is prevented by autoacetylation at Lys-327. Ubiquitinated following deacetylation by HDAC3, leading to cytoplasmic localization. Deubiquitinated by USP7 following interaction with ATF3, promoting its stabilization. As to expression, expressed in testis, heart, brain, kidney and liver. Weakly expressed in lung.

The protein localises to the nucleus. It localises to the chromosome. The protein resides in the cytoplasm. It is found in the centromere. Its subcellular location is the kinetochore. The protein localises to the cytoskeleton. It localises to the spindle pole. The protein resides in the nucleolus. It is found in the perinuclear region. The catalysed reaction is L-lysyl-[histone] + acetyl-CoA = N(6)-acetyl-L-lysyl-[histone] + CoA + H(+). It carries out the reaction L-lysyl-[protein] + acetyl-CoA = N(6)-acetyl-L-lysyl-[protein] + CoA + H(+). The enzyme catalyses (2E)-butenoyl-CoA + L-lysyl-[protein] = N(6)-(2E)-butenoyl-L-lysyl-[protein] + CoA + H(+). It catalyses the reaction 2-hydroxyisobutanoyl-CoA + L-lysyl-[protein] = N(6)-(2-hydroxyisobutanoyl)-L-lysyl-[protein] + CoA + H(+). The catalysed reaction is (S)-lactoyl-CoA + L-lysyl-[protein] = N(6)-[(S)-lactoyl]-L-lysyl-[protein] + CoA + H(+). Its activity is regulated as follows. Acyltransferase and acetyltransferase activities are activated by phosphorylation and autoacetylation. Autoacetylation activates the histone acetyltransferase activity. In terms of biological role, catalytic subunit of the NuA4 histone acetyltransferase complex, a multiprotein complex involved in transcriptional activation of select genes principally by acetylation of nucleosomal histones H2A and H4. Histone acetylation alters nucleosome-DNA interactions and promotes interaction of the modified histones with other proteins which positively regulate transcription. The NuA4 histone acetyltransferase complex is required for the activation of transcriptional programs associated with proto-oncogene mediated growth induction, tumor suppressor mediated growth arrest and replicative senescence, apoptosis, and DNA repair. The NuA4 complex plays a direct role in repair of DNA double-strand breaks (DSBs) by promoting homologous recombination (HR): the complex inhibits TP53BP1 binding to chromatin via MBTD1, which recognizes and binds histone H4 trimethylated at 'Lys-20' (H4K20me), and KAT5 that catalyzes acetylation of 'Lys-15' of histone H2A (H2AK15ac), thereby blocking the ubiquitination mark required for TP53BP1 localization at DNA breaks. Also involved in DSB repair by mediating acetylation of 'Lys-5' of histone H2AX (H2AXK5ac), promoting NBN/NBS1 assembly at the sites of DNA damage. The NuA4 complex plays a key role in hematopoietic stem cell maintenance and is required to maintain acetylated H2A.Z/H2AZ1 at MYC target genes. The NuA4 complex is also required for spermatid development by promoting acetylation of histones: histone hyperacetylation is required for histone replacement during the transition from round to elongating spermatids. Component of a SWR1-like complex that specifically mediates the removal of histone H2A.Z/H2AZ1 from the nucleosome. Also acetylates non-histone proteins, such as BMAL1, ATM, AURKB, CHKA, CGAS, ERCC4/XPF, LPIN1, TP53/p53, NDC80/HEC1, NR1D2, RAN, SOX4, FOXP3, SQSTM1, ULK1 and RUBCNL/Pacer. Directly acetylates and activates ATM. Promotes nucleotide excision repair (NER) by mediating acetylation of ERCC4/XPF, thereby promoting formation of the ERCC4-ERCC1 complex. Relieves NR1D2-mediated inhibition of APOC3 expression by acetylating NR1D2. Acts as a regulator of regulatory T-cells (Treg) by catalyzing FOXP3 acetylation, thereby promoting FOXP3 transcriptional repressor activity. Involved in skeletal myoblast differentiation by mediating acetylation of SOX4. Catalyzes acetylation of APBB1/FE65, increasing its transcription activator activity. Promotes transcription elongation during the activation phase of the circadian cycle by catalyzing acetylation of BMAL1, promoting elongation of circadian transcripts. Together with GSK3 (GSK3A or GSK3B), acts as a regulator of autophagy: phosphorylated at Ser-86 by GSK3 under starvation conditions, leading to activate acetyltransferase activity and promote acetylation of key autophagy regulators, such as ULK1 and RUBCNL/Pacer. Acts as a regulator of the cGAS-STING innate antiviral response by catalyzing acetylation the N-terminus of CGAS, thereby promoting CGAS DNA-binding and activation. Also regulates lipid metabolism by mediating acetylation of CHKA or LPIN1. Promotes lipolysis of lipid droplets following glucose deprivation by mediating acetylation of isoform 1 of CHKA, thereby promoting monomerization of CHKA and its conversion into a tyrosine-protein kinase. Acts as a regulator of fatty-acid-induced triacylglycerol synthesis by catalyzing acetylation of LPIN1, thereby promoting the synthesis of diacylglycerol. In addition to protein acetyltransferase, can use different acyl-CoA substrates, such as (2E)-butenoyl-CoA (crotonyl-CoA), S-lactoyl-CoA (lactyl-CoA) and 2-hydroxyisobutanoyl-CoA (2-hydroxyisobutyryl-CoA), and is able to mediate protein crotonylation, lactylation and 2-hydroxyisobutyrylation, respectively. Acts as a key regulator of chromosome segregation and kinetochore-microtubule attachment during mitosis by mediating acetylation or crotonylation of target proteins. Catalyzes acetylation of AURKB at kinetochores, increasing AURKB activity and promoting accurate chromosome segregation in mitosis. Acetylates RAN during mitosis, promoting microtubule assembly at mitotic chromosomes. Acetylates NDC80/HEC1 during mitosis, promoting robust kinetochore-microtubule attachment. Catalyzes crotonylation of MAPRE1/EB1, thereby ensuring accurate spindle positioning in mitosis. Catalyzes lactylation of NBN/NBS1 in response to DNA damage, thereby promoting DNA double-strand breaks (DSBs) via homologous recombination (HR). The chain is Histone acetyltransferase KAT5 from Mus musculus (Mouse).